A 369-amino-acid chain; its full sequence is FAD-dependent monooxygenase FPY4 (369 aa).

Belongs to the aromatic-ring hydroxylase family. It depends on FAD as a cofactor.

The protein operates within secondary metabolite biosynthesis. Functionally, FAD-dependent monooxygenase; part of the gene cluster that mediates the biosynthesis of the gamma-pyrones fusapyrone (FPY) and deoxyfusapyrone (dFPY). FPY is an undecaketide and thus likely synthesized by the polyketide synthase FPY1 from acetyl-CoA functioning as starter unit and the addition of 10 malonyl-CoA extender units by successive Claisen-condensations. Next to this, FPY shares some rare features: C-glycosylated 4-deoxyglucose at C-3, a gem-dimethyl group at C-13, and an alpha-beta to beta-gamma double bond shift at C-20. During FPY biosynthesis mono-C-methyl groups are transferred to the tetra-, penta-, hexa- and heptaketide, while two C-methyl groups are transferred to the nonaketide, suggesting that the CMet domain is programmed to selectively catalyze two successive C-alpha-methylation reactions of the nonaketide, while other alpha-carbons are non- or mono-methylated only. While the origin of the 4'-deoxyglucose moiety remains opaque, its transfer to C-3 is most likely mediated by the C-glycosyltransferase FPY2. Next to this, the hydroxyl group present at C-33 and discriminating between FPY and dFPY, is likely to be installed by the cytochrome P450 monooxygenase FPY7. No putative function can be predicted for the remaining genes FPY3-FPY6. The polypeptide is FAD-dependent monooxygenase FPY4 (Fusarium mangiferae (Mango malformation disease fungus)).